Here is a 202-residue protein sequence, read N- to C-terminus: ATP-dependent Clp protease proteolytic subunit (202 aa).

Catalysis depends on S101, which acts as the Nucleophile. H126 is a catalytic residue.

Belongs to the peptidase S14 family. In terms of assembly, component of the chloroplastic Clp protease core complex.

It localises to the plastid. The protein localises to the chloroplast stroma. The enzyme catalyses Hydrolysis of proteins to small peptides in the presence of ATP and magnesium. alpha-casein is the usual test substrate. In the absence of ATP, only oligopeptides shorter than five residues are hydrolyzed (such as succinyl-Leu-Tyr-|-NHMec, and Leu-Tyr-Leu-|-Tyr-Trp, in which cleavage of the -Tyr-|-Leu- and -Tyr-|-Trp bonds also occurs).. Its function is as follows. Cleaves peptides in various proteins in a process that requires ATP hydrolysis. Has a chymotrypsin-like activity. Plays a major role in the degradation of misfolded proteins. The sequence is that of ATP-dependent Clp protease proteolytic subunit from Platanus occidentalis (Sycamore).